The primary structure comprises 181 residues: Mitochondrial pyruvate carrier-like protein (181 aa).

Helical transmembrane passes span 23–42 (YLAS…PLAA) and 52–74 (IISG…FAYR). The segment at 125 to 154 (TGSVDSSATSTGSVDSSATSTGSVDSSAAT) is disordered.

This sequence belongs to the mitochondrial pyruvate carrier (MPC) (TC 2.A.105) family.

Its subcellular location is the mitochondrion inner membrane. Functionally, may mediate the uptake of pyruvate into mitochondria. The polypeptide is Mitochondrial pyruvate carrier-like protein (Bos taurus (Bovine)).